A 287-amino-acid polypeptide reads, in one-letter code: MTLSDRLPLYGRLMRLDKPIGSLLLLWPTLWALWLAADGKPPLHVLVIFTIGTVLMRSAGCVINDYADRDFDGHVERTRNRPLATRAVSTREALALAAGLSALSFVLILPLDPLVIWLSFPALFLAASYPFTKRFFAIPQAYLGIAFGFGIPMGFAAVQGEVPPIAWVMLLANIFWAVAYDTEYAMVDRPDDLKIGIKTSAITFGRFDVAAVMLCYAVALGLLGWVGAQAGRGALYFAGLAVAAGMALYHYTLIRHRERAPCFKAFRHNNWLGAAVFAGLALDYLIG.

Helical transmembrane passes span 19–39, 43–63, 94–116, 135–155, 160–180, 207–227, 234–254, and 269–286; these read PIGSLLLLWPTLWALWLAADG, LHVLVIFTIGTVLMRSAGCVI, LALAAGLSALSFVLILPLDPLVI, FFAIPQAYLGIAFGFGIPMGF, GEVPPIAWVMLLANIFWAVAY, FDVAAVMLCYAVALGLLGWVG, ALYFAGLAVAAGMALYHYTLI, and NNWLGAAVFAGLALDYLI.

It belongs to the UbiA prenyltransferase family. It depends on Mg(2+) as a cofactor.

The protein resides in the cell inner membrane. The enzyme catalyses all-trans-octaprenyl diphosphate + 4-hydroxybenzoate = 4-hydroxy-3-(all-trans-octaprenyl)benzoate + diphosphate. It participates in cofactor biosynthesis; ubiquinone biosynthesis. Its function is as follows. Catalyzes the prenylation of para-hydroxybenzoate (PHB) with an all-trans polyprenyl group. Mediates the second step in the final reaction sequence of ubiquinone-8 (UQ-8) biosynthesis, which is the condensation of the polyisoprenoid side chain with PHB, generating the first membrane-bound Q intermediate 3-octaprenyl-4-hydroxybenzoate. In Azoarcus sp. (strain BH72), this protein is 4-hydroxybenzoate octaprenyltransferase.